Consider the following 1363-residue polypeptide: Xanthine dehydrogenase (1363 aa).

In terms of domain architecture, 2Fe-2S ferredoxin-type spans 35–121 (DTIRFYLNGT…GKHVITVEGI (87 aa)). Cysteine 73, cysteine 78, cysteine 81, cysteine 103, cysteine 142, cysteine 145, cysteine 177, and cysteine 179 together coordinate [2Fe-2S] cluster. The FAD-binding PCMH-type domain maps to 266–450 (FGNKRKKWYR…SSLRIPTASE (185 aa)). FAD-binding positions include 294–301 (LIGGSTET), phenylalanine 374, 384–388 (SPAGN), aspartate 397, and lysine 459. Mo-molybdopterin-binding residues include glutamine 798 and phenylalanine 829. 2 residues coordinate substrate: glutamate 833 and arginine 911. Arginine 943 contacts Mo-molybdopterin. 2 residues coordinate substrate: phenylalanine 945 and threonine 1041. Alanine 1110 provides a ligand contact to Mo-molybdopterin. Glutamate 1295 (proton acceptor) is an active-site residue.

Belongs to the xanthine dehydrogenase family. FAD serves as cofactor. Requires Mo-molybdopterin as cofactor. It depends on [2Fe-2S] cluster as a cofactor.

It is found in the peroxisome. It carries out the reaction xanthine + NAD(+) + H2O = urate + NADH + H(+). The catalysed reaction is hypoxanthine + NAD(+) + H2O = xanthine + NADH + H(+). Key enzyme in purine degradation. Catalyzes the oxidation of hypoxanthine to xanthine. Catalyzes the oxidation of xanthine to uric acid. This chain is Xanthine dehydrogenase (hxA), found in Emericella nidulans (strain FGSC A4 / ATCC 38163 / CBS 112.46 / NRRL 194 / M139) (Aspergillus nidulans).